Consider the following 261-residue polypeptide: Probable septum site-determining protein MinC (261 aa).

Residues 106–144 (RAPAAKPADEAEPAAVPAVETAAAPAAAAAPEQSSDPAP) are disordered. Residues 118–144 (PAAVPAVETAAAPAAAAAPEQSSDPAP) are compositionally biased toward low complexity.

It belongs to the MinC family. In terms of assembly, interacts with MinD and FtsZ.

Functionally, cell division inhibitor that blocks the formation of polar Z ring septums. Rapidly oscillates between the poles of the cell to destabilize FtsZ filaments that have formed before they mature into polar Z rings. Prevents FtsZ polymerization. In Burkholderia orbicola (strain MC0-3), this protein is Probable septum site-determining protein MinC.